The chain runs to 433 residues: Protein translocase subunit SecY (433 aa).

The next 10 helical transmembrane spans lie at 17-37 (IVFTILILIVCRFGSFIPIPG), 71-91 (IFALAIMPYITASIIIQLMSV), 117-137 (LTVLLASFQAYGVAISLESIV), 141-161 (GPVVILAGFFFRITTVITLVV), 184-204 (LIIFIGIISGVPSAIISMFEL), 212-232 (PLIAIAVCIGVVVLIAIIIFF), 268-288 (GVIPPIFASSILLFPATLANF), 310-330 (YILLYVALIMFFSFFYTAIVF), 366-386 (LTVIGGIYLSVICVIPELLMN), and 388-408 (YVISLSLGGTSFLIVVNVVLD).

It belongs to the SecY/SEC61-alpha family. As to quaternary structure, component of the Sec protein translocase complex. Heterotrimer consisting of SecY, SecE and SecG subunits. The heterotrimers can form oligomers, although 1 heterotrimer is thought to be able to translocate proteins. Interacts with the ribosome. Interacts with SecDF, and other proteins may be involved. Interacts with SecA.

It is found in the cell inner membrane. Its function is as follows. The central subunit of the protein translocation channel SecYEG. Consists of two halves formed by TMs 1-5 and 6-10. These two domains form a lateral gate at the front which open onto the bilayer between TMs 2 and 7, and are clamped together by SecE at the back. The channel is closed by both a pore ring composed of hydrophobic SecY resides and a short helix (helix 2A) on the extracellular side of the membrane which forms a plug. The plug probably moves laterally to allow the channel to open. The ring and the pore may move independently. This Rickettsia conorii (strain ATCC VR-613 / Malish 7) protein is Protein translocase subunit SecY.